The chain runs to 635 residues: Probable potassium transport system protein Kup (635 aa).

Helical transmembrane passes span 22–42, 59–79, 111–131, 148–168, 180–200, 216–236, 259–279, 297–317, 349–369, 378–398, 404–424, and 428–448; these read LVIG…LYTL, VLGI…LKYV, MYVV…DGVI, APKL…MLFL, AFGP…VYNM, VLFF…VVLA, WQFV…ALVL, ALYP…QALI, IYVP…VVGF, AYGV…VIYA, VPAP…CAFF, and IIKF…LFTL.

The protein belongs to the HAK/KUP transporter (TC 2.A.72) family.

The protein localises to the cell inner membrane. It carries out the reaction K(+)(in) + H(+)(in) = K(+)(out) + H(+)(out). Transport of potassium into the cell. Likely operates as a K(+):H(+) symporter. This Xanthomonas oryzae pv. oryzae (strain KACC10331 / KXO85) protein is Probable potassium transport system protein Kup.